A 252-amino-acid polypeptide reads, in one-letter code: Probable transcriptional regulatory protein RF_0799 (252 aa).

Residues 1 to 21 are disordered; sequence MAGHSKFKNIQHRKGAQDKKR.

Belongs to the TACO1 family.

Its subcellular location is the cytoplasm. This Rickettsia felis (strain ATCC VR-1525 / URRWXCal2) (Rickettsia azadi) protein is Probable transcriptional regulatory protein RF_0799.